The chain runs to 138 residues: Phospholipase A2 group V (138 aa).

The N-terminal stretch at 1 to 20 (MKGLLPLAWFLACSVPAVQG) is a signal peptide. Intrachain disulfides connect Cys46–Cys137, Cys48–Cys64, Cys63–Cys117, Cys70–Cys110, Cys79–Cys103, and Cys97–Cys108. Tyr47, Gly49, and Gly51 together coordinate Ca(2+). The active site involves His67. Asp68 is a Ca(2+) binding site. Asp111 is an active-site residue.

The protein belongs to the phospholipase A2 family. Ca(2+) serves as cofactor. In terms of processing, this enzyme lacks one of the seven disulfide bonds found in similar PLA2 proteins. In terms of tissue distribution, heart, placenta and less abundantly, in lung. Detected in the outer and inner plexiform layers of the retina (at protein level). Expressed in monocytes and macrophages.

The protein resides in the secreted. It is found in the cell membrane. It localises to the cytoplasmic vesicle. The protein localises to the phagosome. Its subcellular location is the recycling endosome. The protein resides in the golgi apparatus. It is found in the cis-Golgi network. It localises to the trans-Golgi network. The catalysed reaction is a 1,2-diacyl-sn-glycero-3-phosphocholine + H2O = a 1-acyl-sn-glycero-3-phosphocholine + a fatty acid + H(+). It carries out the reaction 1-hexadecanoyl-2-(9Z-octadecenoyl)-sn-glycero-3-phosphocholine + H2O = 1-hexadecanoyl-sn-glycero-3-phosphocholine + (9Z)-octadecenoate + H(+). The enzyme catalyses 1-hexadecanoyl-2-(5Z,8Z,11Z,14Z-eicosatetraenoyl)-sn-glycero-3-phosphocholine + H2O = 1-hexadecanoyl-sn-glycero-3-phosphocholine + (5Z,8Z,11Z,14Z)-eicosatetraenoate + H(+). It catalyses the reaction 1-hexadecanoyl-2-(9Z,12Z-octadecadienoyl)-sn-glycero-3-phosphoethanolamine + H2O = 1-hexadecanoyl-sn-glycero-3-phosphoethanolamine + (9Z,12Z)-octadecadienoate + H(+). The catalysed reaction is 1-hexadecanoyl-2-(5Z,8Z,11Z,14Z-eicosatetraenoyl)-sn-glycero-3-phosphoethanolamine + H2O = 1-hexadecanoyl-sn-glycero-3-phosphoethanolamine + (5Z,8Z,11Z,14Z)-eicosatetraenoate + H(+). It carries out the reaction 1-octadecanoyl-2-(5Z,8Z,11Z,14Z-eicosatetraenoyl)-sn-glycero-3-phospho-(1D-myo-inositol) + H2O = 1-octadecanoyl-sn-glycero-3-phospho-(1D-myo-inositol) + (5Z,8Z,11Z,14Z)-eicosatetraenoate + H(+). The enzyme catalyses 1-hexadecanoyl-2-(9Z-octadecenoyl)-sn-glycero-3-phosphoglycerol + H2O = 1-hexadecanoyl-sn-glycero-3-phosphoglycerol + (9Z)-octadecenoate + H(+). It catalyses the reaction N-hexadecanoyl-1,2-di-(9Z-octadecenoyl)-sn-glycero-3-phosphoethanolamine + H2O = N-hexadecanoyl-1-(9Z-octadecenoyl)-sn-glycero-3-phosphoethanolamine + (9Z)-octadecenoate + H(+). The catalysed reaction is 1'-[1,2-di-(9Z-octadecenoyl)-sn-glycero-3-phospho]-3'-[1-(9Z-octadecenoyl)-sn-glycero-3-phospho]-glycerol + H2O = 1',3'-bis-[1-(9Z-octadecenoyl)-sn-glycero-3-phospho]-glycerol + (9Z)-octadecenoate + H(+). It carries out the reaction 1',3'-bis[1,2-di-(9Z-octadecenoyl)-sn-glycero-3-phospho]-glycerol + H2O = 1'-[1,2-di-(9Z-octadecenoyl)-sn-glycero-3-phospho]-3'-[1-(9Z-octadecenoyl)-sn-glycero-3-phospho]-glycerol + (9Z)-octadecenoate + H(+). It participates in lipid metabolism; phospholipid metabolism. It functions in the pathway lipid metabolism; leukotriene B4 biosynthesis. Its pathway is lipid metabolism; leukotriene C4 biosynthesis. Activated by cardiolipin. In terms of biological role, secretory calcium-dependent phospholipase A2 that primarily targets extracellular phospholipids. Hydrolyzes the ester bond of the fatty acyl group attached at sn-2 position of phospholipids (phospholipase A2 activity), preferentially releasing fatty acyl groups with a low degree of unsaturation such as oleoyl (C18:1) and linoleoyl (C18:2) groups. Hydrolyzes low-density lipoprotein (LDL) phospholipids releasing unsaturated fatty acids that drive macrophage polarization toward an M2 phenotype. May act in an autocrine and paracrine manner. Contributes to lipid remodeling of cellular membranes at different subcellular locations and generation of lipid mediators involved in pathogen clearance. Cleaves sn-2 fatty acyl chains of cardiolipin, a major component of the inner membrane of mitochondria and bacterial membranes. Promotes phagocytosis of bacteria in macrophages through production of lysophosphatidylethanolamines. Displays bactericidal activity against Gram-positive bacteria by directly hydrolyzing phospholipids of the bacterial membrane. Promotes phagocytosis and killing of ingested fungi likely through controlling phagosome-lysosome fusion and phagosome maturation. Plays a role in biosynthesis of cysteinyl leukotrienes (CysLTs) in myeloid cells. In eosinophils, triggers perinuclear arachidonate release and LTC4 synthesis in a PLA2G4A-independent way. In neutrophils, amplifies CysLTs biosynthesis initiated by PLA2G4A. Promotes immune complex clearance in macrophages via stimulating synthesis of CysLTs, which act through CYSLTR1 to trigger phagocytosis. May regulate antigen processing in antigen-presenting cells. In pulmonary macrophages regulates IL33 production required for activation of group 2 innate lymphoid cells. May play a role in the biosynthesis of N-acyl ethanolamines that regulate energy metabolism. Hydrolyzes N-acyl phosphatidylethanolamines to N-acyl lysophosphatidylethanolamines, which are further cleaved by a lysophospholipase D to release N-acyl ethanolamines. In Homo sapiens (Human), this protein is Phospholipase A2 group V (PLA2G5).